A 321-amino-acid polypeptide reads, in one-letter code: Ribosomal RNA small subunit methyltransferase H (321 aa).

S-adenosyl-L-methionine contacts are provided by residues 44–46, Asp64, Phe88, Asp109, and Gln116; that span reads GGH.

It belongs to the methyltransferase superfamily. RsmH family.

The protein resides in the cytoplasm. The enzyme catalyses cytidine(1402) in 16S rRNA + S-adenosyl-L-methionine = N(4)-methylcytidine(1402) in 16S rRNA + S-adenosyl-L-homocysteine + H(+). Specifically methylates the N4 position of cytidine in position 1402 (C1402) of 16S rRNA. This Methylobacillus flagellatus (strain ATCC 51484 / DSM 6875 / VKM B-1610 / KT) protein is Ribosomal RNA small subunit methyltransferase H.